The primary structure comprises 82 residues: Probable acyl carrier protein IacP (82 aa).

The region spanning 3 to 78 (MDIEARVKKV…DICRVVKKSL (76 aa)) is the Carrier domain. Serine 38 is modified (O-(pantetheine 4'-phosphoryl)serine).

4'-phosphopantetheine is transferred from CoA to a specific serine of apo-IacP.

Its subcellular location is the cytoplasm. Acyl carrier protein. The chain is Probable acyl carrier protein IacP (iacP) from Salmonella typhimurium (strain SL1344).